The primary structure comprises 232 residues: Octanoyltransferase (232 aa).

Positions 44–219 constitute a BPL/LPL catalytic domain; it reads EHTGDELWVV…QLARQFGLVL (176 aa). Substrate contacts are provided by residues 83–90, 150–152, and 163–165; these read RGGQVTYH, ALG, and GLS. The Acyl-thioester intermediate role is filled by C181.

Belongs to the LipB family.

Its subcellular location is the cytoplasm. The catalysed reaction is octanoyl-[ACP] + L-lysyl-[protein] = N(6)-octanoyl-L-lysyl-[protein] + holo-[ACP] + H(+). Its pathway is protein modification; protein lipoylation via endogenous pathway; protein N(6)-(lipoyl)lysine from octanoyl-[acyl-carrier-protein]: step 1/2. In terms of biological role, catalyzes the transfer of endogenously produced octanoic acid from octanoyl-acyl-carrier-protein onto the lipoyl domains of lipoate-dependent enzymes. Lipoyl-ACP can also act as a substrate although octanoyl-ACP is likely to be the physiological substrate. In Xanthomonas campestris pv. campestris (strain B100), this protein is Octanoyltransferase.